A 585-amino-acid polypeptide reads, in one-letter code: T-cell surface protein tactile (585 aa).

An N-terminal signal peptide occupies residues 1–21 (MEKKWKYCAVYYIIQIHFVKG). The Extracellular portion of the chain corresponds to 22 to 519 (VWEKTVNTEE…IVVNKPKDGM (498 aa)). An Ig-like V-type 1 domain is found at 38 to 125 (GSDVNLTCQT…YECMLVLYPE (88 aa)). N-linked (GlcNAc...) asparagine glycans are attached at residues Asn-42, Asn-97, Asn-107, Asn-148, Asn-156, Asn-166, Asn-200, Asn-215, Asn-277, Asn-278, Asn-300, Asn-350, and Asn-368. Cysteines 45 and 118 form a disulfide. Residues 156–238 (NQTLEIPCFQ…YRLHLSPVQI (83 aa)) form the Ig-like V-type 2 domain. Cys-163 and Cys-247 are disulfide-bonded. The region spanning 269–375 (PEIPVIVENN…VWNISSEKIT (107 aa)) is the Ig-like C2-type domain. An intrachain disulfide couples Cys-290 to Cys-355. Composition is skewed to polar residues over residues 385 to 418 (TDPP…SSVT), 426 to 452 (RPNT…SSGT), and 460 to 475 (RIPS…GAGS). Positions 385–475 (TDPPLSVTES…YSSSPSGAGS (91 aa)) are disordered. N-linked (GlcNAc...) asparagine glycosylation occurs at Asn-435. N-linked (GlcNAc...) asparagine glycosylation occurs at Asn-497. A helical membrane pass occupies residues 520–540 (SWPVIVAALLFCCMILFGLGV). Residues 541 to 585 (RKWCQYQKEIMERPPPFKPPPPPIKYTCIQEPNESDLPYHEMETL) lie on the Cytoplasmic side of the membrane.

As to quaternary structure, homodimer; disulfide-linked. Interacts with PVR. As to expression, expressed on normal T-cell lines and clones, and some transformed T-cells, but no other cultured cell lines tested. It is expressed at very low levels on activated B-cells.

It is found in the membrane. May be involved in adhesive interactions of activated T and NK cells during the late phase of the immune response. Promotes NK cell-target adhesion by interacting with PVR present on target cells. May function at a time after T and NK cells have penetrated the endothelium using integrins and selectins, when they are actively engaging diseased cells and moving within areas of inflammation. This Homo sapiens (Human) protein is T-cell surface protein tactile (CD96).